The following is a 363-amino-acid chain: 3-isopropylmalate dehydrogenase (363 aa).

78–91 contributes to the NAD(+) binding site; sequence GPKWEHLPPAEQPE. Substrate-binding residues include arginine 99, arginine 109, arginine 138, and aspartate 227. Residues aspartate 227, aspartate 251, and aspartate 255 each coordinate Mg(2+). 285-297 serves as a coordination point for NAD(+); sequence GSAPDIAGKNIAN.

It belongs to the isocitrate and isopropylmalate dehydrogenases family. LeuB type 1 subfamily. Homodimer. It depends on Mg(2+) as a cofactor. Mn(2+) serves as cofactor.

It localises to the cytoplasm. It carries out the reaction (2R,3S)-3-isopropylmalate + NAD(+) = 4-methyl-2-oxopentanoate + CO2 + NADH. It participates in amino-acid biosynthesis; L-leucine biosynthesis; L-leucine from 3-methyl-2-oxobutanoate: step 3/4. Its function is as follows. Catalyzes the oxidation of 3-carboxy-2-hydroxy-4-methylpentanoate (3-isopropylmalate) to 3-carboxy-4-methyl-2-oxopentanoate. The product decarboxylates to 4-methyl-2 oxopentanoate. The chain is 3-isopropylmalate dehydrogenase from Yersinia pestis.